The following is a 456-amino-acid chain: MGLSPSNISKLFEPFGFEQAKAVIAAVSGGSDSLGLLFLVRDYMAMLQNPPRLIAVTVDHQLRAESKAEAENVGLLCRQYGIEHRILVWDEAKPTSGLAAAARTARYRLLVQAARDVGGAFIVTGHTQDDQIETFLMRKERSAHAEARGLAAMSLRSLLDGLGLEGSVELDRPLLSVSRQTLRDELRGRGINWVDDPSNANTEYERPRIRHGIAAEADRQTVLDQIAEAGAARERDNAALIAALGNPASLRADANGALLVDPQLYAALPGNARRLFSGLLAAIAGGRRFLPGDSERSRIERVLSGDDDTHRLTVFGALIERGDSGSPHRFLREKRNLPKLHLEPGKPIVWDGRFRFLNEGMMDFELAAPGRQELADFLKSQNIEIESRKREALLVSPALYREGRLFALLFLQDGEFQQDIHIERHFAIFDHVLPGHDFDLARAVEARIGRICAEMS.

28–33 provides a ligand contact to ATP; sequence SGGSDS.

It belongs to the tRNA(Ile)-lysidine synthase family.

It is found in the cytoplasm. It catalyses the reaction cytidine(34) in tRNA(Ile2) + L-lysine + ATP = lysidine(34) in tRNA(Ile2) + AMP + diphosphate + H(+). Its function is as follows. Ligates lysine onto the cytidine present at position 34 of the AUA codon-specific tRNA(Ile) that contains the anticodon CAU, in an ATP-dependent manner. Cytidine is converted to lysidine, thus changing the amino acid specificity of the tRNA from methionine to isoleucine. This Brucella anthropi (strain ATCC 49188 / DSM 6882 / CCUG 24695 / JCM 21032 / LMG 3331 / NBRC 15819 / NCTC 12168 / Alc 37) (Ochrobactrum anthropi) protein is tRNA(Ile)-lysidine synthase.